The following is a 175-amino-acid chain: uncharacterized protein (175 aa).

2 disordered regions span residues 1-32 (MSHK…KLRH) and 156-175 (KQKQ…KYRQ). A compositionally biased stretch (low complexity) spans 14-24 (LLSSSSPVAKK).

This is an uncharacterized protein from Mycoplasma pneumoniae (strain ATCC 29342 / M129 / Subtype 1) (Mycoplasmoides pneumoniae).